Reading from the N-terminus, the 404-residue chain is Cysteine desulfurase IscS (404 aa).

Pyridoxal 5'-phosphate is bound by residues 75 to 76 (AT), Asn155, Gln183, and 203 to 205 (SAH). N6-(pyridoxal phosphate)lysine is present on Lys206. Thr243 serves as a coordination point for pyridoxal 5'-phosphate. Cys328 serves as the catalytic Cysteine persulfide intermediate. Cys328 is a binding site for [2Fe-2S] cluster.

The protein belongs to the class-V pyridoxal-phosphate-dependent aminotransferase family. NifS/IscS subfamily. In terms of assembly, homodimer. Forms a heterotetramer with IscU, interacts with other sulfur acceptors. Pyridoxal 5'-phosphate serves as cofactor.

It is found in the cytoplasm. It carries out the reaction (sulfur carrier)-H + L-cysteine = (sulfur carrier)-SH + L-alanine. It participates in cofactor biosynthesis; iron-sulfur cluster biosynthesis. Functionally, master enzyme that delivers sulfur to a number of partners involved in Fe-S cluster assembly, tRNA modification or cofactor biosynthesis. Catalyzes the removal of elemental sulfur atoms from cysteine to produce alanine. Functions as a sulfur delivery protein for Fe-S cluster synthesis onto IscU, an Fe-S scaffold assembly protein, as well as other S acceptor proteins. This chain is Cysteine desulfurase IscS, found in Vibrio atlanticus (strain LGP32) (Vibrio splendidus (strain Mel32)).